The sequence spans 203 residues: UPF0637 protein MCCL_0722 (203 aa).

Belongs to the UPF0637 family.

The protein is UPF0637 protein MCCL_0722 of Macrococcus caseolyticus (strain JCSC5402) (Macrococcoides caseolyticum).